Reading from the N-terminus, the 208-residue chain is ATP synthase subunit beta, chloroplastic (208 aa).

It belongs to the ATPase alpha/beta chains family. As to quaternary structure, F-type ATPases have 2 components, CF(1) - the catalytic core - and CF(0) - the membrane proton channel. CF(1) has five subunits: alpha(3), beta(3), gamma(1), delta(1), epsilon(1). CF(0) has four main subunits: a(1), b(1), b'(1) and c(9-12).

It localises to the plastid. The protein localises to the chloroplast thylakoid membrane. It catalyses the reaction ATP + H2O + 4 H(+)(in) = ADP + phosphate + 5 H(+)(out). In terms of biological role, produces ATP from ADP in the presence of a proton gradient across the membrane. The catalytic sites are hosted primarily by the beta subunits. The sequence is that of ATP synthase subunit beta, chloroplastic (atpB) from Hypolepis hostilis (Fern).